The sequence spans 302 residues: MNQTAINRADARTRFIFDDMPVRGLHVRLENVWQHIVKQKNYPAAIRCALGELLAAGVLLSGNLKNEGTLIVQVQGQGKLKMLVAEATSDRTVRATARWDETAEIADDESLGDLLGGNGVFVLTLQPKDGEPWQGVVPLEGGSIAQMLVNYMKRSEQLDTHIALSASDEAAGGLLVQRLPEEVLDEEAWEHVSTLARTLTAEELAELDAQHVLYRLFHETPPRVFEPETFESSCTCSRGKVSDMLLMLGGEEVGGVVAEQGSIEVDCDFCHSKYVFDETDVNALFGEDVVGVAKGLPRHTVQ.

2 disulfide bridges follow: Cys-234-Cys-236 and Cys-267-Cys-270.

The protein belongs to the HSP33 family. Under oxidizing conditions two disulfide bonds are formed involving the reactive cysteines. Under reducing conditions zinc is bound to the reactive cysteines and the protein is inactive.

The protein localises to the cytoplasm. Functionally, redox regulated molecular chaperone. Protects both thermally unfolding and oxidatively damaged proteins from irreversible aggregation. Plays an important role in the bacterial defense system toward oxidative stress. This Neisseria gonorrhoeae (strain NCCP11945) protein is 33 kDa chaperonin.